The chain runs to 185 residues: MVKLGNNFSEKSTKQPLLEDGFDTIPLITPLDVNQLQFPPPDKVVVKTKTEYEPDRKKGKFRTPKIAEFTISITEGVSERFKVTVLVLFALAFLTCVVFLVVYKVYKYDHTCPEGFVFKNNQCIPAGLENYYSEQDSNARGKFYTVINHYNLAKQTITRSVSPWMTVLSEEKLSEQETEAAEKSA.

Residues Met1 to Lys82 are Cytoplasmic-facing. The chain crosses the membrane as a helical; Signal-anchor for type II membrane protein span at residues Val83–Tyr103. Topologically, residues Lys104–Ala185 are lumenal.

Belongs to the NSG family.

It is found in the membrane. Its subcellular location is the golgi apparatus. It localises to the trans-Golgi network membrane. The protein localises to the endosome membrane. The protein resides in the cell projection. It is found in the dendrite. Its subcellular location is the early endosome membrane. It localises to the late endosome membrane. The protein localises to the lysosome lumen. The protein resides in the recycling endosome membrane. It is found in the cytoplasmic vesicle membrane. Its subcellular location is the golgi stack membrane. It localises to the endosome. The protein localises to the multivesicular body membrane. Functionally, plays a role in the recycling mechanism in neurons of multiple receptors and acts at the level of early endosomes to promote sorting of receptors toward a recycling pathway. The chain is Neuronal vesicle trafficking-associated protein 1 from Gallus gallus (Chicken).